The following is a 140-amino-acid chain: MSMTVEIRVPNLDCEGCASKLRKTLLKLKGVEEVEVEMETQKVTARGYRLEEKKVLKAVRRAGKAAELWPYRLGNSHFASFYKYPSYVTNHYYSDAHRTDPTGGVHTFFHTPADYSVAVAGDEIAASMFSDDNPHACTIM.

Residues 3 to 67 (MTVEIRVPNL…AVRRAGKAAE (65 aa)) form the HMA domain. Cysteine 14 and cysteine 17 together coordinate a metal cation. Cysteine 137 is modified (cysteine methyl ester). A lipid anchor (S-farnesyl cysteine) is attached at cysteine 137. A propeptide spans 138-140 (TIM) (removed in mature form).

This sequence belongs to the HIPP family.

Its function is as follows. Heavy-metal-binding protein. This is Heavy metal-associated isoprenylated plant protein 31 from Arabidopsis thaliana (Mouse-ear cress).